The chain runs to 447 residues: Beclin-2 (447 aa).

A coiled-coil region spans residues 169–228; that stretch reads EALHAELCAELSSLEQEEARLTQELEDLDGHHARVAAELRAAQAESKELYKQHEQHRVEY. Residues 186–256 form a required for homodimer formation region; sequence EARLTQELED…NQLTYALSQQ (71 aa).

This sequence belongs to the beclin family. Homodimer (via coiled-coil domain). Interacts (via coiled-coil domain) with ATG14 (via coiled-coil domain); this interaction is tighter than BECN2 self-association. Interacts with AMBRA1, UVRAG and PIK3C3/VPS34; these interactions are not disrupted by starvation. Does not interact with RUBCN. Interacts (via N-terminus) with GPRASP1/GASP1; the interaction is direct. As to expression, expressed in brain, skeletal muscle, placenta, thymus and uterus. Expressed at a lower level in liver, testis, stomach, and 17-day-old embryos.

It is found in the cytoplasm. Its function is as follows. Involved in 2 distinct lysosomal degradation pathways: acts as a regulator of autophagy and as a regulator of G-protein coupled receptors turnover. Regulates degradation in lysosomes of a variety of G-protein coupled receptors via its interaction with GPRASP1/GASP1. This chain is Beclin-2, found in Mus musculus (Mouse).